The chain runs to 415 residues: Homoserine O-acetyltransferase (415 aa).

An AB hydrolase-1 domain is found at 47 to 369 (NAVLVCHGLT…HGHDAFLVEP (323 aa)). S155 functions as the Nucleophile in the catalytic mechanism. R226 contacts substrate. Active-site residues include D329 and H362. Substrate is bound at residue D363. Residues 387–415 (RAVTDTATDGGEPDEEEDFAPVHSSLFSR) are disordered.

This sequence belongs to the AB hydrolase superfamily. MetX family. In terms of assembly, homodimer.

The protein localises to the cytoplasm. It carries out the reaction L-homoserine + acetyl-CoA = O-acetyl-L-homoserine + CoA. The protein operates within amino-acid biosynthesis; L-methionine biosynthesis via de novo pathway; O-acetyl-L-homoserine from L-homoserine: step 1/1. In terms of biological role, transfers an acetyl group from acetyl-CoA to L-homoserine, forming acetyl-L-homoserine. The chain is Homoserine O-acetyltransferase from Haloferax prahovense (strain DSM 18310 / JCM 13924 / TL6).